Here is a 118-residue protein sequence, read N- to C-terminus: uncharacterized protein (118 aa).

An N-terminal signal peptide occupies residues M1–S27.

This is an uncharacterized protein from Haemophilus influenzae (strain ATCC 51907 / DSM 11121 / KW20 / Rd).